Consider the following 321-residue polypeptide: AA9 family lytic polysaccharide monooxygenase A (321 aa).

Residues 1 to 21 (MFRAQSFLPVLALVLRVAAHG) form the signal peptide. A Cu(2+)-binding site is contributed by histidine 20. An intrachain disulfide couples cysteine 71 to cysteine 197. Asparagine 72 is a glycosylation site (N-linked (GlcNAc...) asparagine). Histidine 105 contacts Cu(2+). N-linked (GlcNAc...) asparagine glycosylation is present at asparagine 157. 2 residues coordinate O2: histidine 183 and glutamine 192. Position 194 (tyrosine 194) interacts with Cu(2+). The tract at residues 278–306 (SSSAAATQSSSAAPSSSAIGTSTASSAAA) is disordered. Residue serine 293 is the site of GPI-anchor amidated serine attachment. Residues 294–321 (SAIGTSTASSAAASGTAIVDANTCMNSA) constitute a propeptide, removed in mature form.

It belongs to the polysaccharide monooxygenase AA9 family. Requires Cu(2+) as cofactor.

The protein resides in the cell membrane. The enzyme catalyses [(1-&gt;4)-beta-D-glucosyl]n+m + reduced acceptor + O2 = 4-dehydro-beta-D-glucosyl-[(1-&gt;4)-beta-D-glucosyl]n-1 + [(1-&gt;4)-beta-D-glucosyl]m + acceptor + H2O.. In terms of biological role, lytic polysaccharide monooxygenase (LPMO) that depolymerizes crystalline and amorphous polysaccharides via the oxidation of scissile alpha- or beta-(1-4)-glycosidic bonds, yielding C1 or C4 oxidation products. Catalysis by LPMOs requires the reduction of the active-site copper from Cu(II) to Cu(I) by a reducing agent and H(2)O(2) or O(2) as a cosubstrate. Has broad specificity, cleaving at any position along the beta-glucan backbone of xyloglucan, regardless of substitutions. Shows minor activity on glucomannan. The protein is AA9 family lytic polysaccharide monooxygenase A of Gloeophyllum trabeum (strain ATCC 11539 / FP-39264 / Madison 617) (Brown rot fungus).